A 420-amino-acid polypeptide reads, in one-letter code: UDP-N-acetylglucosamine 1-carboxyvinyltransferase 2 (420 aa).

Residue 22–23 participates in phosphoenolpyruvate binding; it reads KN. Arg-92 is a UDP-N-acetyl-alpha-D-glucosamine binding site. Catalysis depends on Cys-116, which acts as the Proton donor. Position 116 is a 2-(S-cysteinyl)pyruvic acid O-phosphothioketal (Cys-116). Residues 121 to 125, Asp-307, and Ile-329 each bind UDP-N-acetyl-alpha-D-glucosamine; that span reads RPIDL.

Belongs to the EPSP synthase family. MurA subfamily.

The protein resides in the cytoplasm. It catalyses the reaction phosphoenolpyruvate + UDP-N-acetyl-alpha-D-glucosamine = UDP-N-acetyl-3-O-(1-carboxyvinyl)-alpha-D-glucosamine + phosphate. Its pathway is cell wall biogenesis; peptidoglycan biosynthesis. Functionally, cell wall formation. Adds enolpyruvyl to UDP-N-acetylglucosamine. This Streptococcus thermophilus (strain CNRZ 1066) protein is UDP-N-acetylglucosamine 1-carboxyvinyltransferase 2.